The chain runs to 109 residues: Fluoride-specific ion channel FluC 1 (109 aa).

A run of 4 helical transmembrane segments spans residues 1-21 (MVIV…YFFS), 29-49 (LPLG…VFYN), 55-75 (EVYA…STLN), and 87-107 (VFYS…FLGI). Na(+) contacts are provided by Gly66 and Thr69.

This sequence belongs to the fluoride channel Fluc/FEX (TC 1.A.43) family.

The protein resides in the cell membrane. It catalyses the reaction fluoride(in) = fluoride(out). Its activity is regulated as follows. Na(+) is not transported, but it plays an essential structural role and its presence is essential for fluoride channel function. Its function is as follows. Fluoride-specific ion channel. Important for reducing fluoride concentration in the cell, thus reducing its toxicity. This is Fluoride-specific ion channel FluC 1 from Streptococcus pneumoniae serotype 4 (strain ATCC BAA-334 / TIGR4).